Reading from the N-terminus, the 337-residue chain is Phospholipase A1 1 (337 aa).

An N-terminal signal peptide occupies residues 1–21 (MNFKYSILFICFVKVLDNCYA). A propeptide spanning residues 22-35 (ADDLTTLRNGTLDR) is cleaved from the precursor. Cysteine 41 and cysteine 124 are joined by a disulfide. Residue serine 174 is the Nucleophile of the active site. The active-site Charge relay system is aspartate 202. Cystine bridges form between cysteine 213–cysteine 218 and cysteine 256–cysteine 261. The Charge relay system role is filled by histidine 263. 3 disulfides stabilise this stretch: cysteine 278/cysteine 305, cysteine 279/cysteine 330, and cysteine 298/cysteine 303.

This sequence belongs to the AB hydrolase superfamily. Lipase family. Expressed by the venom gland.

The protein resides in the secreted. It carries out the reaction a 1,2-diacyl-sn-glycero-3-phosphocholine + H2O = a 2-acyl-sn-glycero-3-phosphocholine + a fatty acid + H(+). Functionally, catalyzes the hydrolysis of phosphatidylcholine with phospholipase A1 activity. May act as an allergen and induce hemolytic activity. This is Phospholipase A1 1 from Polistes dominula (European paper wasp).